Reading from the N-terminus, the 722-residue chain is Probable cation-transporting ATPase HI_0290 (722 aa).

Residues 9–75 (KKISIQIGGM…IIHKTGFSAH (67 aa)) enclose the HMA domain. A metal cation-binding residues include Cys-20 and Cys-23. The next 6 membrane-spanning stretches (helical) occupy residues 94-114 (LIVL…MIGG), 118-138 (LMLP…WLAI), 157-177 (VLVS…LFYH), 180-200 (HAMG…VSLG), 340-360 (VFVP…YILT), and 373-393 (VLVI…IMVG). Asp-422 acts as the 4-aspartylphosphate intermediate in catalysis. 4 helical membrane-spanning segments follow: residues 523-543 (IWQI…GAFA), 608-628 (LGHI…LASA), 675-695 (LFFA…GFLS), and 697-717 (IIAG…ALRL). Residues Asp-617 and Asp-621 each contribute to the Mg(2+) site.

This sequence belongs to the cation transport ATPase (P-type) (TC 3.A.3) family. Type IB subfamily.

It localises to the cell membrane. The enzyme catalyses ATP + H2O = ADP + phosphate + H(+). The sequence is that of Probable cation-transporting ATPase HI_0290 from Haemophilus influenzae (strain ATCC 51907 / DSM 11121 / KW20 / Rd).